Here is a 252-residue protein sequence, read N- to C-terminus: Hydroxyacylglutathione hydrolase (252 aa).

Zn(2+) is bound by residues His-52, His-54, Asp-56, His-57, His-107, Asp-128, and His-166.

This sequence belongs to the metallo-beta-lactamase superfamily. Glyoxalase II family. Monomer. It depends on Zn(2+) as a cofactor.

It catalyses the reaction an S-(2-hydroxyacyl)glutathione + H2O = a 2-hydroxy carboxylate + glutathione + H(+). The protein operates within secondary metabolite metabolism; methylglyoxal degradation; (R)-lactate from methylglyoxal: step 2/2. Its function is as follows. Thiolesterase that catalyzes the hydrolysis of S-D-lactoyl-glutathione to form glutathione and D-lactic acid. The polypeptide is Hydroxyacylglutathione hydrolase (Neisseria meningitidis serogroup C / serotype 2a (strain ATCC 700532 / DSM 15464 / FAM18)).